We begin with the raw amino-acid sequence, 391 residues long: ATP-sensitive inward rectifier potassium channel 1 (391 aa).

Residues 1-77 (MNASSRNVFD…IWTTVLDLKW (77 aa)) lie on the Cytoplasmic side of the membrane. Ser44 is subject to Phosphoserine; by SGK1. Residues 78–102 (RYKMTIFITAFLGSWFFFGLLWYAV) traverse the membrane as a helical segment. The Extracellular portion of the chain corresponds to 103–127 (AYIHKDLPEFHPSANHTPCVENING). Asn117 carries an N-linked (GlcNAc...) asparagine glycan. Positions 128-139 (LTSAFLFSLETQ) form an intramembrane region, helical; Pore-forming. The segment at residues 140-146 (VTIGYGF) is an intramembrane region (pore-forming). Residues 141-146 (TIGYGF) carry the Selectivity filter motif. Topologically, residues 147–155 (RCVTEQCAT) are extracellular. Residues 156 to 177 (AIFLLIFQSILGVIINSFMCGA) form a helical membrane-spanning segment. At 178–391 (ILAKISRPKK…EVNETDDTKM (214 aa)) the chain is on the cytoplasmic side. The tract at residues 180 to 207 (AKISRPKKRAKTITFSKNAVISKRGGKL) is polyphosphoinositide (PIP2)-binding. Position 223 to 230 (223 to 230 (GSHIYGKL)) interacts with ATP.

Belongs to the inward rectifier-type potassium channel (TC 1.A.2.1) family. KCNJ1 subfamily. In terms of assembly, interacts with SGK1 and SLC9A3R2/NHERF2. Post-translationally, phosphorylation at Ser-44 by SGK1 is necessary for its expression at the cell membrane. In terms of tissue distribution, in the kidney and pancreatic islets. Lower levels in skeletal muscle, pancreas, spleen, brain, heart and liver.

The protein localises to the cell membrane. The enzyme catalyses K(+)(in) = K(+)(out). Its activity is regulated as follows. Inhibited by WNK3. Activated by phosphatidylinositol 4,5 biphosphate (PtdIns(4,5)P2). Its function is as follows. Inward rectifier potassium channels are characterized by a greater tendency to allow potassium to flow into the cell rather than out of it. Their voltage dependence is regulated by the concentration of extracellular potassium; as external potassium is raised, the voltage range of the channel opening shifts to more positive voltages. The inward rectification is mainly due to the blockage of outward current by internal magnesium. This channel is activated by internal ATP and can be blocked by external barium. In the kidney, probably plays a major role in potassium homeostasis. In Homo sapiens (Human), this protein is ATP-sensitive inward rectifier potassium channel 1 (KCNJ1).